Here is a 540-residue protein sequence, read N- to C-terminus: GMP synthase [glutamine-hydrolyzing] (540 aa).

A Glutamine amidotransferase type-1 domain is found at 24–217 (KILIVDFGSQ…VRKVAGLTGD (194 aa)). Cys101 (nucleophile) is an active-site residue. Catalysis depends on residues His191 and Glu193. Residues 218–415 (WTMRAFREEA…LGLPEIFVGR (198 aa)) form the GMPS ATP-PPase domain. 245 to 251 (SGGVDSS) contributes to the ATP binding site.

As to quaternary structure, homodimer.

It carries out the reaction XMP + L-glutamine + ATP + H2O = GMP + L-glutamate + AMP + diphosphate + 2 H(+). The protein operates within purine metabolism; GMP biosynthesis; GMP from XMP (L-Gln route): step 1/1. Its function is as follows. Catalyzes the synthesis of GMP from XMP. This chain is GMP synthase [glutamine-hydrolyzing], found in Nitrobacter hamburgensis (strain DSM 10229 / NCIMB 13809 / X14).